The sequence spans 1136 residues: Alpha-1,4-glucan:maltose-1-phosphate maltosyltransferase (1136 aa).

Residues Met-1–Pro-439 form a unknown region. Positions Val-440–Arg-1136 are maltosyltransferase. 3 residues coordinate alpha-maltose 1-phosphate: Lys-710, Gln-770, and Asp-805. Asp-842 acts as the Nucleophile in catalysis. Asn-843 lines the alpha-maltose 1-phosphate pocket. The active-site Proton donor is Glu-871. Position 982-983 (Lys-982–Tyr-983) interacts with alpha-maltose 1-phosphate.

It in the C-terminal section; belongs to the glycosyl hydrolase 13 family. GlgE subfamily. In terms of assembly, homodimer.

It carries out the reaction alpha-maltose 1-phosphate + [(1-&gt;4)-alpha-D-glucosyl](n) = [(1-&gt;4)-alpha-D-glucosyl](n+2) + phosphate. Functionally, maltosyltransferase that uses maltose 1-phosphate (M1P) as the sugar donor to elongate linear or branched alpha-(1-&gt;4)-glucans. Is involved in a branched alpha-glucan biosynthetic pathway from trehalose, together with TreS, Mak and GlgB. The polypeptide is Alpha-1,4-glucan:maltose-1-phosphate maltosyltransferase (glgE) (Burkholderia pseudomallei (strain K96243)).